The sequence spans 115 residues: Large ribosomal subunit protein bL19 (115 aa).

This sequence belongs to the bacterial ribosomal protein bL19 family.

Functionally, this protein is located at the 30S-50S ribosomal subunit interface and may play a role in the structure and function of the aminoacyl-tRNA binding site. The polypeptide is Large ribosomal subunit protein bL19 (Francisella tularensis subsp. tularensis (strain FSC 198)).